Here is a 228-residue protein sequence, read N- to C-terminus: uncharacterized protein (228 aa).

It belongs to the HAD-like hydrolase superfamily.

The protein resides in the cytoplasm. It is found in the nucleus. This is an uncharacterized protein from Schizosaccharomyces pombe (strain 972 / ATCC 24843) (Fission yeast).